Reading from the N-terminus, the 77-residue chain is Acyl carrier protein (77 aa).

Residues 1–76 (MSIEERVKKI…SAIDYVTKAN (76 aa)) enclose the Carrier domain. Residue S36 is modified to O-(pantetheine 4'-phosphoryl)serine.

The protein belongs to the acyl carrier protein (ACP) family. In terms of processing, 4'-phosphopantetheine is transferred from CoA to a specific serine of apo-ACP by AcpS. This modification is essential for activity because fatty acids are bound in thioester linkage to the sulfhydryl of the prosthetic group.

It localises to the cytoplasm. The protein operates within lipid metabolism; fatty acid biosynthesis. In terms of biological role, carrier of the growing fatty acid chain in fatty acid biosynthesis. In Actinobacillus pleuropneumoniae serotype 5b (strain L20), this protein is Acyl carrier protein.